Here is a 643-residue protein sequence, read N- to C-terminus: Transmembrane 9 superfamily member 4 (643 aa).

The signal sequence occupies residues 1-23 (MAAAMIWWPRFLLLLCLTCKGST). Residues 24 to 282 (FYVPGVAPIN…TMSDVQIHWF (259 aa)) lie on the Extracellular side of the membrane. The helical transmembrane segment at 283–303 (SIINSVVVVFFLSGILSMIII) threads the bilayer. The Cytoplasmic portion of the chain corresponds to 304 to 347 (RTLRKDIANYNKEDDIEDTMEESGWKLVHGDVFRPPQYPMILSS). Residue tyrosine 313 is modified to Phosphotyrosine. The chain crosses the membrane as a helical span at residues 348–368 (LLGSGIQLFCMILIVIFVAML). The Extracellular portion of the chain corresponds to 369–377 (GMLSPSSRG). Residues 378-398 (ALMTTACFLFMFMGVFGGFSA) traverse the membrane as a helical segment. The Cytoplasmic portion of the chain corresponds to 399–417 (GRLYRTLKGHRWKKGAFCT). The chain crosses the membrane as a helical span at residues 418-438 (ATLYPGVVFGICFVLNCFIWG). Residues 439–450 (KHSSGAVPFPTM) are Extracellular-facing. Residues 451–471 (VALLCMWFGISLPLVYLGYYF) form a helical membrane-spanning segment. Residues 472–502 (GFRKQPYDNPVRTNQIPRQIPEQRWYMNRFV) lie on the Cytoplasmic side of the membrane. Residues 503–523 (GILMAGILPFGAMFIELFFIF) traverse the membrane as a helical segment. At 524 to 536 (SAIWENQFYYLFG) the chain is on the extracellular side. Residues 537–557 (FLFLVFIILVVSCSQISIVMV) form a helical membrane-spanning segment. Over 558–571 (YFQLCAEDYRWWWR) the chain is Cytoplasmic. The helical transmembrane segment at 572-592 (NFLVSGGSAFYVLVYAIFYFV) threads the bilayer. Residues 593–599 (NKLDIVE) lie on the Extracellular side of the membrane. Residues 600–620 (FIPSLLYFGYTTLMVLSFWLL) form a helical membrane-spanning segment. The Cytoplasmic portion of the chain corresponds to 621–643 (TGTIGFYAAYMFVRKIYAAVKID).

The protein belongs to the nonaspanin (TM9SF) (TC 9.A.2) family.

The protein resides in the membrane. The protein localises to the golgi apparatus. It is found in the early endosome. In terms of biological role, associates with proteins harboring glycine-rich transmembrane domains and ensures their efficient localization to the cell surface. In Rattus norvegicus (Rat), this protein is Transmembrane 9 superfamily member 4 (Tm9sf4).